Reading from the N-terminus, the 292-residue chain is Acetyl-coenzyme A carboxylase carboxyl transferase subunit beta (292 aa).

The CoA carboxyltransferase N-terminal domain occupies 29–292 (LWSKCPECGQ…HGCESRVASS (264 aa)). Residues cysteine 33, cysteine 36, cysteine 52, and cysteine 55 each contribute to the Zn(2+) site. The C4-type zinc finger occupies 33-55 (CPECGQVVYRKDLLSNASVCGNC).

It belongs to the AccD/PCCB family. In terms of assembly, acetyl-CoA carboxylase is a heterohexamer composed of biotin carboxyl carrier protein (AccB), biotin carboxylase (AccC) and two subunits each of ACCase subunit alpha (AccA) and ACCase subunit beta (AccD). Zn(2+) is required as a cofactor.

The protein resides in the cytoplasm. It catalyses the reaction N(6)-carboxybiotinyl-L-lysyl-[protein] + acetyl-CoA = N(6)-biotinyl-L-lysyl-[protein] + malonyl-CoA. It functions in the pathway lipid metabolism; malonyl-CoA biosynthesis; malonyl-CoA from acetyl-CoA: step 1/1. Its function is as follows. Component of the acetyl coenzyme A carboxylase (ACC) complex. Biotin carboxylase (BC) catalyzes the carboxylation of biotin on its carrier protein (BCCP) and then the CO(2) group is transferred by the transcarboxylase to acetyl-CoA to form malonyl-CoA. This chain is Acetyl-coenzyme A carboxylase carboxyl transferase subunit beta, found in Synechococcus sp. (strain CC9311).